Consider the following 607-residue polypeptide: Elongation factor 4 (607 aa).

The 183-residue stretch at 11-193 (ENIRNFSIIA…KIVEVVPAPD (183 aa)) folds into the tr-type G domain. Residues 23–28 (DHGKST) and 140–143 (NKID) contribute to the GTP site.

The protein belongs to the TRAFAC class translation factor GTPase superfamily. Classic translation factor GTPase family. LepA subfamily.

The protein resides in the cell membrane. The catalysed reaction is GTP + H2O = GDP + phosphate + H(+). Its function is as follows. Required for accurate and efficient protein synthesis under certain stress conditions. May act as a fidelity factor of the translation reaction, by catalyzing a one-codon backward translocation of tRNAs on improperly translocated ribosomes. Back-translocation proceeds from a post-translocation (POST) complex to a pre-translocation (PRE) complex, thus giving elongation factor G a second chance to translocate the tRNAs correctly. Binds to ribosomes in a GTP-dependent manner. This Staphylococcus aureus (strain MW2) protein is Elongation factor 4.